A 388-amino-acid chain; its full sequence is Phosphoglycerate kinase (388 aa).

Substrate is bound by residues 24 to 26, Arg-37, 56 to 59, Arg-117, and Arg-165; these read DLN and RGGR. The tract at residues 26 to 136 is disordered; the sequence is NVPLDSDGEQ…RRPRNVQGRR (111 aa). The segment covering 34–55 has biased composition (basic and acidic residues); that stretch reads EQGRITDPGPDHRVGADVERTG. The span at 102–136 shows a compositional bias: basic residues; it reads GGHRRPGPRRGVDRRRRPAAGKHPVRRPRNVQGRR. ATP-binding positions include Lys-215, Gly-303, Glu-334, and 363–366; that span reads GGDS.

It belongs to the phosphoglycerate kinase family. As to quaternary structure, monomer.

The protein localises to the cytoplasm. It carries out the reaction (2R)-3-phosphoglycerate + ATP = (2R)-3-phospho-glyceroyl phosphate + ADP. It functions in the pathway carbohydrate degradation; glycolysis; pyruvate from D-glyceraldehyde 3-phosphate: step 2/5. The sequence is that of Phosphoglycerate kinase (pgk) from Mycobacterium avium.